Reading from the N-terminus, the 217-residue chain is tRNA (guanine-N(7)-)-methyltransferase (217 aa).

S-adenosyl-L-methionine is bound by residues Glu43, Asp68, Asn101, and Asn123. Lys127 is a substrate binding site. The tract at residues 129-134 (RHNKRR) is interaction with RNA. Residues Asp159 and 196-199 (TEYE) contribute to the substrate site.

It belongs to the class I-like SAM-binding methyltransferase superfamily. TrmB family.

It carries out the reaction guanosine(46) in tRNA + S-adenosyl-L-methionine = N(7)-methylguanosine(46) in tRNA + S-adenosyl-L-homocysteine. The protein operates within tRNA modification; N(7)-methylguanine-tRNA biosynthesis. Catalyzes the formation of N(7)-methylguanine at position 46 (m7G46) in tRNA. The chain is tRNA (guanine-N(7)-)-methyltransferase from Clostridium botulinum (strain Langeland / NCTC 10281 / Type F).